Here is a 164-residue protein sequence, read N- to C-terminus: UPF0114 protein Avin_40830 (164 aa).

Transmembrane regions (helical) follow at residues 15 to 35 (LLAP…LKFF), 53 to 73 (LILV…LVMV), 103 to 125 (GSLK…LRVF), and 136 to 156 (LLWY…MSYL).

This sequence belongs to the UPF0114 family.

The protein resides in the cell membrane. In Azotobacter vinelandii (strain DJ / ATCC BAA-1303), this protein is UPF0114 protein Avin_40830.